The chain runs to 110 residues: V-type proton ATPase subunit F (110 aa).

The protein belongs to the V-ATPase F subunit family. As to quaternary structure, V-ATPase is a heteromultimeric enzyme made up of two complexes: the ATP-hydrolytic V1 complex and the proton translocation V0 complex. The V1 complex consists of three catalytic AB heterodimers that form a heterohexamer, three peripheral stalks each consisting of EG heterodimers, one central rotor including subunits D and F, and the regulatory subunits C and H. The proton translocation complex V0 consists of the proton transport subunit a, a ring of proteolipid subunits c9c'', rotary subunit d, subunits e and f, and two accessory subunits.

In terms of biological role, subunit of the V1 complex of vacuolar(H+)-ATPase (V-ATPase), a multisubunit enzyme composed of a peripheral complex (V1) that hydrolyzes ATP and a membrane integral complex (V0) that translocates protons. V-ATPase is responsible for acidifying and maintaining the pH of intracellular compartments and in some cell types, is targeted to the plasma membrane, where it is responsible for acidifying the extracellular environment. The polypeptide is V-type proton ATPase subunit F (atp6s14) (Xenopus laevis (African clawed frog)).